A 67-amino-acid chain; its full sequence is Large ribosomal subunit protein bL35 (67 aa).

It belongs to the bacterial ribosomal protein bL35 family.

The chain is Large ribosomal subunit protein bL35 from Novosphingobium aromaticivorans (strain ATCC 700278 / DSM 12444 / CCUG 56034 / CIP 105152 / NBRC 16084 / F199).